Reading from the N-terminus, the 404-residue chain is G1/S-specific cyclin-E2 (404 aa).

A disordered region spans residues 1–41; that stretch reads MSRRSSRLQAKQHAQPNQPDSPQETQIIQAKKRKTAQDVKK. Positions 7–28 are enriched in polar residues; the sequence is RLQAKQHAQPNQPDSPQETQII. Phosphoserine is present on serine 21. Lysine 348 is modified (N6-lactoyllysine). Serine 383 bears the Phosphoserine mark. Position 392 is a phosphothreonine (threonine 392).

The protein belongs to the cyclin family. Cyclin E subfamily. In terms of assembly, interacts with the CDK2 (in vivo) and CDK3 (in vitro) protein kinases to form a serine/threonine kinase holoenzyme complex. The cyclin subunit imparts substrate specificity to the complex. Phosphorylation by CDK2 triggers its release from CDK2 and degradation via the ubiquitin proteasome pathway. In terms of processing, lactylated at Lys-348. Delactylated by SIRT3. Highest levels in adult testis, thymus and brain. Lower levels in placenta, spleen and colon.

The protein resides in the nucleus. Its function is as follows. Essential for the control of the cell cycle at the late G1 and early S phase. The polypeptide is G1/S-specific cyclin-E2 (Ccne2) (Mus musculus (Mouse)).